We begin with the raw amino-acid sequence, 231 residues long: Cytochrome c oxidase assembly factor 7 (231 aa).

Ala-2 is subject to N-acetylalanine. Sel1-like repeat units follow at residues 34–66 (PDGC…EENQ), 68–104 (SDSC…EKPG), 108–146 (IAAC…DGGY), 147–183 (TSSC…DLGH), and 184–219 (IWAC…QLHK).

Belongs to the hcp beta-lactamase family. In terms of assembly, interacts with CHCHD4/MIA40 through transient intermolecular disulfide bonds.

It is found in the mitochondrion intermembrane space. Required for assembly of mitochondrial respiratory chain complex I and complex IV. This chain is Cytochrome c oxidase assembly factor 7 (COA7), found in Homo sapiens (Human).